Reading from the N-terminus, the 338-residue chain is Envelope glycoprotein K (338 aa).

A signal peptide spans M1 to G30. Residues A31–T121 lie on the Extracellular side of the membrane. The interval A31–T121 is involved in fusion. Residues N48 and N58 are each glycosylated (N-linked (GlcNAc...) asparagine; by host). Residues R122–H140 form a helical membrane-spanning segment. Over Q141–P212 the chain is Cytoplasmic. A helical transmembrane segment spans residues A213 to V233. At G234–C243 the chain is on the extracellular side. A helical transmembrane segment spans residues A244 to L264. The Cytoplasmic segment spans residues T265–S301. Residues T265–S301 form an interaction with UL20 region. The chain crosses the membrane as a helical span at residues I302–L322. Over V323–V338 the chain is Extracellular.

This sequence belongs to the alphaherpesvirinae glycoprotein K family. As to quaternary structure, interacts (via UL20 interaction region) with protein UL20 (via N-terminus); this interaction probably plays a role in the coordinate transport of protein UL20 and gK to the trans-Golgi network (TGN), and is required for the cell surface expression of gK. Post-translationally, N-glycosylated.

It is found in the host cell membrane. The protein localises to the host endosome membrane. The protein resides in the host Golgi apparatus membrane. In terms of biological role, glycoprotein that probably modulates membrane fusion events during secondary envelopment of cytoplasmic capsids that bud into specific trans-Golgi network (TGN)-derived membranes. Also plays a role, together with gB, in virus-induced cell-to-cell fusion (syncytia formation). Seems to block fusion of virions with infected-cell membranes. In Homo sapiens (Human), this protein is Envelope glycoprotein K (gK).